Reading from the N-terminus, the 284-residue chain is L-ribulose-5-phosphate 3-epimerase UlaE (284 aa).

Belongs to the L-ribulose-5-phosphate 3-epimerase family.

The catalysed reaction is L-ribulose 5-phosphate = L-xylulose 5-phosphate. It functions in the pathway cofactor degradation; L-ascorbate degradation; D-xylulose 5-phosphate from L-ascorbate: step 3/4. Catalyzes the isomerization of L-xylulose-5-phosphate to L-ribulose-5-phosphate. Is involved in the anaerobic L-ascorbate utilization. This chain is L-ribulose-5-phosphate 3-epimerase UlaE, found in Escherichia coli O8 (strain IAI1).